The primary structure comprises 481 residues: Alpha-ketoglutaric semialdehyde dehydrogenase 1 (481 aa).

NADP(+)-binding positions include 154 to 155, 178 to 181, and 231 to 232; these read WN, KAPE, and GS. The Proton acceptor role is filled by glutamate 253. An NADP(+)-binding site is contributed by leucine 254. Cysteine 287 functions as the Nucleophile in the catalytic mechanism. Glutamate 384 is an NADP(+) binding site.

The protein belongs to the aldehyde dehydrogenase family. Homotetramer.

The catalysed reaction is 2,5-dioxopentanoate + NADP(+) + H2O = 2-oxoglutarate + NADPH + 2 H(+). It carries out the reaction 2,5-dioxopentanoate + NAD(+) + H2O = 2-oxoglutarate + NADH + 2 H(+). It catalyses the reaction succinate semialdehyde + NAD(+) + H2O = succinate + NADH + 2 H(+). Catalyzes the NAD(P)(+)-dependent oxidation of alpha-ketoglutaric semialdehyde (alphaKGSA) to alpha-ketoglutarate. Is involved in a degradation pathway of L-arabinose that allows A.brasilense to grow on L-arabinose as a sole carbon source. Prefers NAD(+) to NADP(+) as a cosubstrate. Displays broad substrate specificity: exhibits the highest activity with alphaKGSA and succinic semialdehyde as substrates, but to a lesser extent, is also active with glutaraldehyde, benzaldehyde, and a number of aldehydes from C3 to C8. The polypeptide is Alpha-ketoglutaric semialdehyde dehydrogenase 1 (araE) (Azospirillum brasilense).